The sequence spans 559 residues: Acetolactate synthase, catabolic (559 aa).

Residues arginine 159, 263-284, and 304-323 each bind FAD; these read FNNQ…IGYS and DVLP…LVGD. Residue aspartate 447 coordinates Mg(2+).

Belongs to the TPP enzyme family. In terms of assembly, homodimer.

It catalyses the reaction 2 pyruvate + H(+) = (2S)-2-acetolactate + CO2. It functions in the pathway polyol metabolism; (R,R)-butane-2,3-diol biosynthesis; (R,R)-butane-2,3-diol from pyruvate: step 1/3. The protein is Acetolactate synthase, catabolic (budB) of Raoultella terrigena (Klebsiella terrigena).